A 352-amino-acid polypeptide reads, in one-letter code: Pyrimidine monooxygenase RutA (352 aa).

FMN-binding positions include I49–K50, N115, E124, R140–Y141, and S189.

The protein belongs to the NtaA/SnaA/DszA monooxygenase family. RutA subfamily.

It carries out the reaction uracil + FMNH2 + NADH + O2 = (Z)-3-ureidoacrylate + FMN + NAD(+) + H2O + H(+). It catalyses the reaction thymine + FMNH2 + NADH + O2 = (Z)-2-methylureidoacrylate + FMN + NAD(+) + H2O + H(+). Its function is as follows. Catalyzes the pyrimidine ring opening between N-3 and C-4 by an unusual flavin hydroperoxide-catalyzed mechanism, adding oxygen atoms in the process to yield ureidoacrylate peracid, that immediately reacts with FMN forming ureidoacrylate and FMN-N(5)-oxide. The FMN-N(5)-oxide reacts spontaneously with NADH to produce FMN. Requires the flavin reductase RutF to regenerate FMN in vivo. The chain is Pyrimidine monooxygenase RutA from Caulobacter segnis (strain ATCC 21756 / DSM 7131 / JCM 7823 / NBRC 15250 / LMG 17158 / TK0059) (Mycoplana segnis).